A 396-amino-acid polypeptide reads, in one-letter code: MAKAKFERNKPHCNIGTIGHVDHGKTSLTAAITKVLAETGGATFTAYDQIDKAPEEKARGITISTAHVEYETTNRHYAHVDCPGHADYVKNMITGAAQMDGAILVVSAADGPMPQTREHILLARQVGVPALVVFLNKCDMVDDPELLELVEMEVRELLSKYDFPGDDIPIVKGSALAALENSDAKLGHDAILELMKAVDAYIPQPERPIDQPFLMPVEDVFSISGRGTVVTGRVERGIVKVGEEIEIVGIRDTQKTTCTGVEMFRKLLDQGQAGDNIGCLLRGTKREDVERGQVLCKPGSVKPHTKFKAEAYILTKEEGGRHTPFFTNYRPQFYFRTTDVTGVVHLPEGTEMVMPGDNIAMEVHLIVPIAMEEKLRFAIREGGRTVGAGVVASIIE.

In terms of domain architecture, tr-type G spans 10–206 (KPHCNIGTIG…AVDAYIPQPE (197 aa)). Residues 19 to 26 (GHVDHGKT) form a G1 region. 19–26 (GHVDHGKT) lines the GTP pocket. Residue Thr26 participates in Mg(2+) binding. The tract at residues 60–64 (GITIS) is G2. Residues 81-84 (DCPG) are G3. GTP-binding positions include 81-85 (DCPGH) and 136-139 (NKCD). Residues 136 to 139 (NKCD) are G4. Residues 174-176 (SAL) are G5.

The protein belongs to the TRAFAC class translation factor GTPase superfamily. Classic translation factor GTPase family. EF-Tu/EF-1A subfamily. As to quaternary structure, monomer.

Its subcellular location is the cytoplasm. The enzyme catalyses GTP + H2O = GDP + phosphate + H(+). Functionally, GTP hydrolase that promotes the GTP-dependent binding of aminoacyl-tRNA to the A-site of ribosomes during protein biosynthesis. In Rhodopseudomonas palustris (strain BisB5), this protein is Elongation factor Tu 1.